The chain runs to 364 residues: Alanine racemase (364 aa).

Catalysis depends on Lys34, which acts as the Proton acceptor; specific for D-alanine. Lys34 is subject to N6-(pyridoxal phosphate)lysine. Arg129 is a substrate binding site. Catalysis depends on Tyr259, which acts as the Proton acceptor; specific for L-alanine. Met307 is a substrate binding site.

The protein belongs to the alanine racemase family. It depends on pyridoxal 5'-phosphate as a cofactor.

It carries out the reaction L-alanine = D-alanine. The protein operates within amino-acid biosynthesis; D-alanine biosynthesis; D-alanine from L-alanine: step 1/1. Catalyzes the interconversion of L-alanine and D-alanine. May also act on other amino acids. This is Alanine racemase (alr) from Coxiella burnetii (strain Dugway 5J108-111).